The primary structure comprises 201 residues: UPF0301 protein Smed_0532 (201 aa).

The protein belongs to the UPF0301 (AlgH) family.

This is UPF0301 protein Smed_0532 from Sinorhizobium medicae (strain WSM419) (Ensifer medicae).